A 503-amino-acid polypeptide reads, in one-letter code: MWLDERLLALFRRNFQSTLTYWSVFFSFGLCIAFLGPTLLDLRCQTHSSLQDITWVFFAQQFCLLVGSTLGGVFKRTVKQSLFLLFLSSLTISVVFVIIPFCDHVGVLALVMAIAGLAMGCIDTISNMQLVKIYQQDSAIFLQVLHFFVGFGALLSPLIADPFLSDTNCIQSNATQNGSRNLEHIRNSLVPHHPRNVSHYVLPLQGALVTQVSYAFWIMAAINLPVPVAVFYLIYKKGMVPGCHIQNGGLLSADELAMEMHKENDSQKIEAHEEHGHAVSLLCCQNKKIWNAPFTFFAIHMCAAVTLFMTDGIVGEYSGFVYSYAVEQPLNLAHKTAGYLPSLFWAFITLGRLISIPVSYKMAPRSMLFINLIGVTATFLFLLLSQNSTTGMFVGTALLGLWLSSVFPSMLAYTEDILNYKGCATTVLVTGAGMGEMVLQILVGSVMQTQGSYSFLVCGICLSSLAFTLYAVLLVVDSLHNRASEDSACKPPGLDGEATSYQS.

12 consecutive transmembrane segments (helical) span residues 19–39 (LTYW…GPTL), 53–73 (ITWV…LGGV), 82–102 (LFLL…IPFC), 105–125 (VGVL…IDTI), 139–159 (AIFL…SPLI), 214–234 (YAFW…FYLI), 289–309 (IWNA…TLFM), 338–358 (GYLP…SIPV), 366–386 (SMLF…LLSQ), 392–412 (MFVG…SMLA), 427–447 (VLVT…GSVM), and 455–475 (FLVC…VLLV). The disordered stretch occupies residues 484–503 (SEDSACKPPGLDGEATSYQS).

It belongs to the major facilitator superfamily.

The protein localises to the membrane. The polypeptide is Major facilitator superfamily domain-containing protein 4A (mfsd4a) (Xenopus tropicalis (Western clawed frog)).